The following is a 319-amino-acid chain: Pectinesterase (319 aa).

The residue at position 1 (glutamine 1) is a Pyrrolidone carboxylic acid. Threonine 83 and glutamine 113 together coordinate substrate. The Proton donor role is filled by aspartate 136. A disulfide bond links cysteine 150 and cysteine 170. Aspartate 157 serves as the catalytic Nucleophile. Residues arginine 225 and tryptophan 227 each coordinate substrate.

Belongs to the pectinesterase family.

The protein localises to the secreted. It localises to the cell wall. It carries out the reaction [(1-&gt;4)-alpha-D-galacturonosyl methyl ester](n) + n H2O = [(1-&gt;4)-alpha-D-galacturonosyl](n) + n methanol + n H(+). It functions in the pathway glycan metabolism; pectin degradation; 2-dehydro-3-deoxy-D-gluconate from pectin: step 1/5. In terms of biological role, catalyzes the deesterification of methyl-esterified D-galactosiduronic acid units in pectic compounds. It participates in modulating cell wall during fruit ripening, cell wall extension during pollen germination, and in defense mechanisms against pathogens. The protein is Pectinesterase of Daucus carota (Wild carrot).